A 345-amino-acid chain; its full sequence is L-threonine 3-dehydrogenase (345 aa).

C39 serves as a coordination point for Zn(2+). Residues T41 and H44 each act as charge relay system in the active site. H64, E65, C94, C97, C100, and C108 together coordinate Zn(2+). NAD(+) is bound by residues I176, D196, R201, 263 to 265, and 287 to 288; these read LGI and VY.

This sequence belongs to the zinc-containing alcohol dehydrogenase family. Homotetramer. Zn(2+) is required as a cofactor.

The protein resides in the cytoplasm. It catalyses the reaction L-threonine + NAD(+) = (2S)-2-amino-3-oxobutanoate + NADH + H(+). The protein operates within amino-acid degradation; L-threonine degradation via oxydo-reductase pathway; glycine from L-threonine: step 1/2. Catalyzes the NAD(+)-dependent oxidation of L-threonine to 2-amino-3-ketobutyrate. This chain is L-threonine 3-dehydrogenase, found in Anaeromyxobacter dehalogenans (strain 2CP-C).